The primary structure comprises 367 residues: Germination protease (367 aa).

Residues Met-1–Asp-15 constitute a propeptide that is removed on maturation.

It belongs to the peptidase A25 family. Homotetramer. Autoproteolytically processed. The inactive tetrameric zymogen termed p46 autoprocesses to a smaller form termed p41, which is active only during spore germination.

It carries out the reaction Endopeptidase action with P4 Glu or Asp, P1 preferably Glu &gt; Asp, P1' hydrophobic and P2' Ala.. Its function is as follows. Initiates the rapid degradation of small, acid-soluble proteins during spore germination. This chain is Germination protease, found in Bacillus mycoides (strain KBAB4) (Bacillus weihenstephanensis).